We begin with the raw amino-acid sequence, 395 residues long: Phosphopentomutase (395 aa).

Residues aspartate 14, aspartate 286, histidine 291, aspartate 327, histidine 328, and histidine 339 each contribute to the Mn(2+) site.

It belongs to the phosphopentomutase family. It depends on Mn(2+) as a cofactor.

The protein localises to the cytoplasm. The enzyme catalyses 2-deoxy-alpha-D-ribose 1-phosphate = 2-deoxy-D-ribose 5-phosphate. It catalyses the reaction alpha-D-ribose 1-phosphate = D-ribose 5-phosphate. It participates in carbohydrate degradation; 2-deoxy-D-ribose 1-phosphate degradation; D-glyceraldehyde 3-phosphate and acetaldehyde from 2-deoxy-alpha-D-ribose 1-phosphate: step 1/2. Functionally, isomerase that catalyzes the conversion of deoxy-ribose 1-phosphate (dRib-1-P) and ribose 1-phosphate (Rib-1-P) to deoxy-ribose 5-phosphate (dRib-5-P) and ribose 5-phosphate (Rib-5-P), respectively. This Staphylococcus haemolyticus (strain JCSC1435) protein is Phosphopentomutase.